The chain runs to 473 residues: MPLPDKFFLFIQDDYHNVKLRVKINEKVLRGQPLIFSDDFNVPVHAPTSGLIENICFNSDSIKKNIKIVISPDYLDQWIRLNPIKDYKKYAPEKLIKIIHQSGVVGLGGGQFPSSKKIIFSINRAHTLIVNAVESEPYITSDNCLIYNHISEILIGCKIICWITKIKTVLIAIQEDNIQSISKIQHLIKNKSLFKICIIKKKYPAGSSKVLVKSLTGKEVPHGKHSIDIGYLIFNVATIFSIKRAIINGKPLTERVVTLMSDKNLLSGNFWVRIGTPIKYFLTSNKLKQSFIASVYLGGPFMGKKINNLNHSILKKTNSIFITHKKEKNESISEKTCIRCGYCSYVCPVNLLPQQLYWYIKNKNHVQTKKHYVLDCIECKACEKVCPSYIPLVKYFIQEKNILKNITLENNRKKMSLIRFKTREQRLFNEKRMIHENNDTFLMKKKDKKINNITKTVLKKTLQDAIERMKSKQ.

2 consecutive 4Fe-4S ferredoxin-type domains span residues 328–357 (KNES…QQLY) and 368–396 (TKKH…VKYF). Cys-337, Cys-340, Cys-343, Cys-347, Cys-376, Cys-379, Cys-382, and Cys-386 together coordinate [4Fe-4S] cluster.

Belongs to the 4Fe4S bacterial-type ferredoxin family. RnfC subfamily. As to quaternary structure, the complex is composed of six subunits: RnfA, RnfB, RnfC, RnfD, RnfE and RnfG. The cofactor is [4Fe-4S] cluster.

It is found in the cell inner membrane. Part of a membrane-bound complex that couples electron transfer with translocation of ions across the membrane. The protein is Ion-translocating oxidoreductase complex subunit C of Buchnera aphidicola subsp. Acyrthosiphon pisum (strain APS) (Acyrthosiphon pisum symbiotic bacterium).